A 391-amino-acid chain; its full sequence is Secreted aspartic protease 1 (391 aa).

A signal peptide spans 1 to 18; the sequence is MFLKNIFIALAIALLVDA. Positions 19-50 are cleaved as a propeptide — activation peptide; that stretch reads SPAKRSPGFVTLDFDVIKTPVNATGQEGKVKR. N-linked (GlcNAc...) asparagine glycosylation occurs at N40. The region spanning 64–377 is the Peptidase A1 domain; that stretch reads YAADITIGSN…DLDDDKISLA (314 aa). The active site involves D82. Pepstatin A is bound at residue 82 to 84; the sequence is DTG. Residues C97 and C109 are joined by a disulfide bond. Zn(2+)-binding residues include D241 and D263. The active site involves D267. Residue 267 to 271 coordinates pepstatin A; it reads DSGTT. C305 and C343 are joined by a disulfide.

This sequence belongs to the peptidase A1 family. As to quaternary structure, monomer.

The protein resides in the secreted. It carries out the reaction Preferential cleavage at the carboxyl of hydrophobic amino acids, but fails to cleave 15-Leu-|-Tyr-16, 16-Tyr-|-Leu-17 and 24-Phe-|-Phe-25 of insulin B chain. Activates trypsinogen, and degrades keratin.. Inhibited by pepstatin A analogs and squash aspartic peptidase inhibitor (SQAPI). Functionally, secreted aspartic peptidases (SAPs) are a group of ten acidic hydrolases considered as key virulence factors. These enzymes supply the fungus with nutrient amino acids as well as are able to degrade the selected host's proteins involved in the immune defense. Induces host inflammatory cytokine production in a proteolytic activity-independent way. Plays a role in tissue damage during superficial infection. Moreover, acts toward human hemoglobin though limited proteolysis to generate a variety of antimicrobial hemocidins, enabling to compete with the other microorganisms of the same physiological niche using the microbicidal peptides generated from the host protein. Its function is as follows. Plays a key role in defense against host by cleaving histatin-5 (Hst 5), a peptide from human saliva that carries out fungicidal activity. The cleavage rate decreases in an order of SAP2 &gt; SAP9 &gt; SAP3 &gt; SAP7 &gt; SAP4 &gt; SAP1 &gt; SAP8. The first cleavage occurs between residues 'Lys-17' and 'His-18' of Hst 5, giving DSHAKRHHGYKRKFHEK and HHSHRGY peptides. Further fragmentation by SAP1 results in AKRHHGYKRKFHEK and AKRHHGY products. In Candida albicans (Yeast), this protein is Secreted aspartic protease 1.